We begin with the raw amino-acid sequence, 277 residues long: 3-methyl-2-oxobutanoate hydroxymethyltransferase (277 aa).

Residues D43 and D82 each coordinate Mg(2+). Residues 43–44, D82, and K112 each bind 3-methyl-2-oxobutanoate; that span reads DS. E114 lines the Mg(2+) pocket. E181 serves as the catalytic Proton acceptor.

It belongs to the PanB family. In terms of assembly, homodecamer; pentamer of dimers. Mg(2+) serves as cofactor.

It localises to the cytoplasm. The enzyme catalyses 3-methyl-2-oxobutanoate + (6R)-5,10-methylene-5,6,7,8-tetrahydrofolate + H2O = 2-dehydropantoate + (6S)-5,6,7,8-tetrahydrofolate. It functions in the pathway cofactor biosynthesis; (R)-pantothenate biosynthesis; (R)-pantoate from 3-methyl-2-oxobutanoate: step 1/2. In terms of biological role, catalyzes the reversible reaction in which hydroxymethyl group from 5,10-methylenetetrahydrofolate is transferred onto alpha-ketoisovalerate to form ketopantoate. This chain is 3-methyl-2-oxobutanoate hydroxymethyltransferase, found in Bacillus velezensis (strain DSM 23117 / BGSC 10A6 / LMG 26770 / FZB42) (Bacillus amyloliquefaciens subsp. plantarum).